A 1091-amino-acid chain; its full sequence is Rho GTPase-activating protein 7 (1091 aa).

One can recognise an SAM domain in the interval 11-78; that stretch reads LTQIEAKEAC…LNKCAVMKLE (68 aa). A phosphoserine mark is found at Ser-86, Ser-89, and Ser-320. The segment at 273–447 is focal adhesion-targeting (FAT); sequence QLNCVEISAL…RLSIYDNVPG (175 aa). Disordered regions lie at residues 292 to 327, 382 to 439, and 491 to 553; these read VRKRSVSNSTQTSSSSSQSETSSAVSTPSPVTRTRS, PKAL…SSRL, and SDEG…GVGA. 2 stretches are compositionally biased toward low complexity: residues 297-323 and 386-400; these read VSNSTQTSSSSSQSETSSAVSTPSPVT and SNGSFPPSGNNSSVN. Positions 414–425 are enriched in basic and acidic residues; sequence LRRENSSDSPKE. The segment covering 499–511 has biased composition (polar residues); sequence ALDSVSPCPSSPK. The segment covering 513-523 has biased composition (basic and acidic residues); sequence IHLDVDNDRAT. The span at 526-535 shows a compositional bias: polar residues; the sequence is DLDSTGNSLN. The segment at 614–636 is polybasic cluster (PBR); it reads KHGFSWAVPKFMKRIKVPDYKDR. The Rho-GAP domain occupies 641–847; sequence VPLTVNVQRT…HMIAECKKLF (207 aa). Residues 877–1084 form the START domain; it reads RNDESADYQH…RDSFSNQNTE (208 aa).

Interacts with EF1A1, facilitates EF1A1 distribution to the membrane periphery and ruffles upon growth factor stimulation and suppresses cell migration. Interacts with tensin TNS1 (via N-terminus); the interaction is decreased by phosphorylation of TNS1. Interacts with TNS3 and PTEN; in resting cells, interacts with TNS3 (via C2 tensin-type domain) but, following growth factor stimulation, TNS3 and PTEN are phosphorylated which leads to weakened interaction with TNS3 and enhanced interaction with PTEN. Interacts (via C-terminus) with tensin TNS4 (via SH2 domain); the interaction is independent of tyrosine phosphorylation of DLC1.

It localises to the cytoplasm. The protein resides in the cell junction. Its subcellular location is the focal adhesion. The protein localises to the membrane. Functions as a GTPase-activating protein for the small GTPases RHOA, RHOB, RHOC and CDC42, terminating their downstream signaling. This induces morphological changes and detachment through cytoskeletal reorganization, playing a critical role in biological processes such as cell migration and proliferation. Also functions in vivo as an activator of the phospholipase PLCD1. Active DLC1 increases cell migration velocity but reduces directionality. Required for growth factor-induced epithelial cell migration; in resting cells, interacts with TNS3 while PTEN interacts with the p85 regulatory subunit of the PI3K kinase complex but growth factor stimulation induces phosphorylation of TNS3 and PTEN, causing them to change their binding preference so that PTEN interacts with DLC1 and TNS3 interacts with p85. The PTEN-DLC1 complex translocates to the posterior of migrating cells to activate RHOA while the TNS3-p85 complex translocates to the leading edge of migrating cells to promote RAC1 activation. This is Rho GTPase-activating protein 7 (DLC1) from Canis lupus familiaris (Dog).